The primary structure comprises 302 residues: Glutaminase (302 aa).

Substrate contacts are provided by Ser61, Asn111, Glu155, Asn162, Tyr186, Tyr238, and Val256.

The protein belongs to the glutaminase family. In terms of assembly, homotetramer.

It carries out the reaction L-glutamine + H2O = L-glutamate + NH4(+). This is Glutaminase from Pseudomonas savastanoi pv. phaseolicola (strain 1448A / Race 6) (Pseudomonas syringae pv. phaseolicola (strain 1448A / Race 6)).